A 139-amino-acid chain; its full sequence is MTERTLVLIKPDAVARGYVGEILSRIERKGLTIAALELRVASEEVAGSHYAEHAERPFYPSLLEFITSGPLVAAVLEGPRAIAAFRQLAGGTDPVDKALPGTIRGDFGLEAQQNLVHGSDSVESAEREIALWFPALSSI.

6 residues coordinate ATP: K10, F58, R86, T92, R104, and N114. H117 serves as the catalytic Pros-phosphohistidine intermediate.

This sequence belongs to the NDK family. In terms of assembly, homotetramer. Requires Mg(2+) as cofactor.

The protein localises to the cytoplasm. It carries out the reaction a 2'-deoxyribonucleoside 5'-diphosphate + ATP = a 2'-deoxyribonucleoside 5'-triphosphate + ADP. The catalysed reaction is a ribonucleoside 5'-diphosphate + ATP = a ribonucleoside 5'-triphosphate + ADP. Its function is as follows. Major role in the synthesis of nucleoside triphosphates other than ATP. The ATP gamma phosphate is transferred to the NDP beta phosphate via a ping-pong mechanism, using a phosphorylated active-site intermediate. The polypeptide is Nucleoside diphosphate kinase (Rhodococcus erythropolis (strain PR4 / NBRC 100887)).